Here is a 161-residue protein sequence, read N- to C-terminus: Small ribosomal subunit protein uS9 (161 aa).

The protein belongs to the universal ribosomal protein uS9 family.

In Bartonella bacilliformis (strain ATCC 35685 / KC583 / Herrer 020/F12,63), this protein is Small ribosomal subunit protein uS9.